A 103-amino-acid chain; its full sequence is Signal recognition particle 19 kDa protein (103 aa).

Belongs to the SRP19 family. As to quaternary structure, part of the signal recognition particle protein translocation system, which is composed of SRP and FtsY. Archaeal SRP consists of a 7S RNA molecule of 300 nucleotides and two protein subunits: SRP54 and SRP19.

Its subcellular location is the cytoplasm. Functionally, involved in targeting and insertion of nascent membrane proteins into the cytoplasmic membrane. Binds directly to 7S RNA and mediates binding of the 54 kDa subunit of the SRP. The protein is Signal recognition particle 19 kDa protein of Methanopyrus kandleri (strain AV19 / DSM 6324 / JCM 9639 / NBRC 100938).